The sequence spans 156 residues: Transcription antitermination protein NusB (156 aa).

Belongs to the NusB family.

Involved in transcription antitermination. Required for transcription of ribosomal RNA (rRNA) genes. Binds specifically to the boxA antiterminator sequence of the ribosomal RNA (rrn) operons. This is Transcription antitermination protein NusB from Rickettsia conorii (strain ATCC VR-613 / Malish 7).